The primary structure comprises 360 residues: MGETNTAAQPSQEFEKVLADSSTDVASFDAHDKTLLQKLQHFLHSSPAAVPLIVLVLSLIAFGVILGGKFFSAFTMTLILQQVAIVGIVGAAQTLVILTAGIDLSVGAIMVLSSVIMGQFTFRYGFPPALSVICGLGVGALCGYINGTLVARMKLPPFIVTLGMWQIVLASNFLYSANETIRAQDISANASILQFFGQNFRIGNAVFTYGVVVMVLLVCLLWYVLNRTAWGRYVYAVGDDPEAAKLAGVNVTRMLISIYTLSGLICALAGWALIGRIGSVSPTAGQFANIESITAVVIGGISLFGGRGSIMGMLFGALIVGVFSLGLRLMGTDPQWTYLLIGLLIIIAVAIDQWIRKVAA.

Transmembrane regions (helical) follow at residues 48–68 (AAVP…ILGG), 84–106 (AIVG…DLSV), 125–145 (GFPP…CGYI), 155–175 (LPPF…NFLY), 205–225 (AVFT…WYVL), 254–274 (MLIS…WALI), 284–304 (AGQF…ISLF), 310–330 (IMGM…LRLM), and 335–355 (QWTY…DQWI).

The protein belongs to the binding-protein-dependent transport system permease family. In terms of assembly, the complex is composed of two ATP-binding proteins (FrcA), two transmembrane proteins (FrcC) and a solute-binding protein (FrcB).

It localises to the cell inner membrane. Part of the high-affinity ABC transporter complex FrcBCA involved in fructose uptake. Is also a high-affinity transporter for ribose and mannose. Responsible for the translocation of the substrate across the membrane. The sequence is that of Fructose import permease protein FrcC from Rhizobium meliloti (Ensifer meliloti).